Reading from the N-terminus, the 134-residue chain is Calcitonin gene-related peptide 2 (134 aa).

The N-terminal stretch at 1-26 (MDFWKFFPFLALSSMWVLCLASSLQA) is a signal peptide. Positions 27 to 86 (APFRSALESSLDLGTLSDQEKHLLLAALIQDYEQKARKLEQEEQETEGSRKGSSSSVISQ) are excised as a propeptide. The disordered stretch occupies residues 65 to 91 (LEQEEQETEGSRKGSSSSVISQKRSCN). Residues 77–89 (KGSSSSVISQKRS) show a composition bias toward low complexity. Cys90 and Cys95 are disulfide-bonded. Phe125 carries the phenylalanine amide modification. The propeptide occupies 131-134 (DLRV).

The protein belongs to the calcitonin family.

It is found in the secreted. Functionally, CALCB/CGRP2 is a peptide hormone that induces vasodilation mediated by the CALCRL-RAMP1 receptor complex. Dilates a variety of vessels including the coronary, cerebral and systemic vasculature. Its abundance in the CNS also points toward a neurotransmitter or neuromodulator role. This chain is Calcitonin gene-related peptide 2, found in Rattus norvegicus (Rat).